The chain runs to 650 residues: MSSQSLYKVSGNIAANALVNNDQYKKMYQESIVNPEGFWREHGKRIDWIKPYTKIKKTSFDDHNLSINWFYDGTLNASANCLDRHLAEHSDRVAIIWEGDNASEQRKITYGELHTQVCKFANALRSQGVRRGDIVTIYMPMVPEAAVAMLACARIGAVHSVVFGGFSPDSIASRVIDGKSKVVITADEGMRGGRAIPLKRNIDDALKHPDVTSVEKVIVLKRTGGKVDWVEGRDVWWHSLVETASEHCAIEEMGAEDPLFLLYTSGSTGNPKGVLHTTGGYMVYASMTHEYVFDYKPGEIYWCTADVGWITGHSYMVYGPLANGATVLIHEGIPNHPSPARLGEMIDRHKVNILYTAPTLIRALMAEGKQHFDKYDGSSLRIMGSVGEPINPEAWRWYHEVIGHEHCPIVDTWWQTETGGILITPLPGATDTKPGSATRPFFGVQPALVDNMGNILEGATEGNLVLLDSWPGQMRTVYGDHERFVLTYFKTFRGMYFTGDGARRDEDGYYWITGRVDDVINVSGHRLGTAEVESALVSHELVAEAAVVGYPHDIKGQGIYAYVTLTRGTEESEELRQELRQWVRKEIGALATPDLIQWATGLPKTRSGKIMRRFLRKIAANEVTNLGDASTLADPAVIETLIETRLNRNE.

Residues 191–194, T311, and N335 contribute to the CoA site; that span reads RGGR. Residues 387–389, 411–416, D500, and R515 each bind ATP; these read GEP and DTWWQT. Residue S523 participates in CoA binding. R526 contributes to the ATP binding site. Residues V537, H539, and V542 each coordinate Mg(2+). R584 contacts CoA. K609 is subject to N6-acetyllysine.

This sequence belongs to the ATP-dependent AMP-binding enzyme family. The cofactor is Mg(2+). Acetylated. Deacetylation by the SIR2-homolog deacetylase activates the enzyme.

It catalyses the reaction acetate + ATP + CoA = acetyl-CoA + AMP + diphosphate. In terms of biological role, catalyzes the conversion of acetate into acetyl-CoA (AcCoA), an essential intermediate at the junction of anabolic and catabolic pathways. AcsA undergoes a two-step reaction. In the first half reaction, AcsA combines acetate with ATP to form acetyl-adenylate (AcAMP) intermediate. In the second half reaction, it can then transfer the acetyl group from AcAMP to the sulfhydryl group of CoA, forming the product AcCoA. The chain is Acetyl-coenzyme A synthetase from Shewanella sp. (strain MR-7).